We begin with the raw amino-acid sequence, 193 residues long: Oleosin S1-2 (193 aa).

A2 carries the post-translational modification N-acetylalanine. Positions 2 to 39 (ADVRTHAHQVQVHPLRQHEGGIKVVYPQSGPSSTQVLA) are polar. 3 helical membrane-spanning segments follow: residues 37 to 57 (VLAVVAGVPVGGTLLTLAGLT), 66 to 86 (ILAFPLFLIFSPVIVPAAFVI), and 87 to 107 (GLAMTGFMASGAIGLTGLSSM). Residues 40–113 (VVAGVPVGGT…LSSMSWVLNH (74 aa)) form a hydrophobic region. Residues 139 to 193 (AGQRTKDAGQTIEDKAHDVRESKTYDVRDRDTKGHTASGGDRDTKTTREVRVATT) form a disordered region. Basic and acidic residues predominate over residues 142-193 (RTKDAGQTIEDKAHDVRESKTYDVRDRDTKGHTASGGDRDTKTTREVRVATT).

This sequence belongs to the oleosin family.

The protein resides in the lipid droplet. The protein localises to the membrane. In terms of biological role, may have a structural role to stabilize the lipid body during desiccation of the seed by preventing coalescence of the oil. Probably interacts with both lipid and phospholipid moieties of lipid bodies. May also provide recognition signals for specific lipase anchorage in lipolysis during seedling growth. The sequence is that of Oleosin S1-2 (S1) from Brassica napus (Rape).